The following is a 453-amino-acid chain: Chromosomal replication initiator protein DnaA (453 aa).

The tract at residues 1 to 74 is domain I, interacts with DnaA modulators; the sequence is MKEKQFWNRI…GFEIYDAEIT (74 aa). The segment at 74–113 is domain II; the sequence is TPHYIFTKPQDTTSSQVEEATNLTLYDYSPKLVSIPYSDT. Positions 114–331 are domain III, AAA+ region; sequence GLKEKYTFDN…GAINDITLIA (218 aa). ATP is bound by residues Gly-158, Gly-160, Lys-161, and Thr-162. A domain IV, binds dsDNA region spans residues 332–453; that stretch reads RVKKIKDITI…EIESIKKKIK (122 aa).

This sequence belongs to the DnaA family. Oligomerizes as a right-handed, spiral filament on DNA at oriC. Interacts (via domains I and III) with CcrZ.

The protein resides in the cytoplasm. Its activity is regulated as follows. CcrZ stimulates DnaA, possibly by phosphorylation of an intermediate molecule, to initiate DNA replication. Functionally, plays an essential role in the initiation and regulation of chromosomal replication. ATP-DnaA binds to the origin of replication (oriC) to initiate formation of the DNA replication initiation complex once per cell cycle. Binds the DnaA box (a 9 base pair repeat at the origin) and separates the double-stranded (ds)DNA. Forms a right-handed helical filament on oriC DNA; dsDNA binds to the exterior of the filament while single-stranded (ss)DNA is stabiized in the filament's interior. The ATP-DnaA-oriC complex binds and stabilizes one strand of the AT-rich DNA unwinding element (DUE), permitting loading of DNA polymerase. After initiation quickly degrades to an ADP-DnaA complex that is not apt for DNA replication. Binds acidic phospholipids. Mutations in this gene suppress a deletion of cell cycle regulator ccrZ. The sequence is that of Chromosomal replication initiator protein DnaA from Streptococcus pneumoniae serotype 2 (strain D39 / NCTC 7466).